The sequence spans 145 residues: Nucleoside diphosphate kinase (145 aa).

6 residues coordinate ATP: lysine 11, phenylalanine 59, arginine 87, threonine 93, arginine 104, and asparagine 114. The active-site Pros-phosphohistidine intermediate is the histidine 117.

It belongs to the NDK family. As to quaternary structure, homotetramer. Requires Mg(2+) as cofactor.

Its subcellular location is the cytoplasm. The catalysed reaction is a 2'-deoxyribonucleoside 5'-diphosphate + ATP = a 2'-deoxyribonucleoside 5'-triphosphate + ADP. It catalyses the reaction a ribonucleoside 5'-diphosphate + ATP = a ribonucleoside 5'-triphosphate + ADP. In terms of biological role, major role in the synthesis of nucleoside triphosphates other than ATP. The ATP gamma phosphate is transferred to the NDP beta phosphate via a ping-pong mechanism, using a phosphorylated active-site intermediate. The chain is Nucleoside diphosphate kinase from Myxococcus xanthus.